A 146-amino-acid polypeptide reads, in one-letter code: D-aminoacyl-tRNA deacylase (146 aa).

The Gly-cisPro motif, important for rejection of L-amino acids signature appears at Gly-138–Pro-139.

It belongs to the DTD family. Homodimer.

It is found in the cytoplasm. The catalysed reaction is glycyl-tRNA(Ala) + H2O = tRNA(Ala) + glycine + H(+). It carries out the reaction a D-aminoacyl-tRNA + H2O = a tRNA + a D-alpha-amino acid + H(+). Functionally, an aminoacyl-tRNA editing enzyme that deacylates mischarged D-aminoacyl-tRNAs. Also deacylates mischarged glycyl-tRNA(Ala), protecting cells against glycine mischarging by AlaRS. Acts via tRNA-based rather than protein-based catalysis; rejects L-amino acids rather than detecting D-amino acids in the active site. By recycling D-aminoacyl-tRNA to D-amino acids and free tRNA molecules, this enzyme counteracts the toxicity associated with the formation of D-aminoacyl-tRNA entities in vivo and helps enforce protein L-homochirality. The protein is D-aminoacyl-tRNA deacylase of Xanthomonas oryzae pv. oryzae (strain MAFF 311018).